The chain runs to 143 residues: Holo-[acyl-carrier-protein] synthase (143 aa).

Positions 9 and 63 each coordinate Mg(2+).

This sequence belongs to the P-Pant transferase superfamily. AcpS family. It depends on Mg(2+) as a cofactor.

Its subcellular location is the cytoplasm. The enzyme catalyses apo-[ACP] + CoA = holo-[ACP] + adenosine 3',5'-bisphosphate + H(+). Functionally, transfers the 4'-phosphopantetheine moiety from coenzyme A to a Ser of acyl-carrier-protein. In Burkholderia pseudomallei (strain 1106a), this protein is Holo-[acyl-carrier-protein] synthase.